The sequence spans 825 residues: Putative NAD(+)--arginine ADP-ribosyltransferase Mav (825 aa).

Positions 435-673 (ALKGLKKPPG…SGSDHHLPLH (239 aa)) are disordered. Composition is skewed to pro residues over residues 443 to 457 (PGVPKPPEVKPPAAP) and 468 to 491 (SGKPGPVAPSGKPAPGPADGPLPH). A compositionally biased stretch (low complexity) spans 560-579 (PAADTPAPSAPAASMSAASG). Residues 580–589 (PPMPPTPSLP) are compositionally biased toward pro residues. The span at 590–599 (EPASLPSGPS) shows a compositional bias: low complexity. Residues 650 to 825 (KNANGHGPHD…GRTIIEMIER (176 aa)) enclose the TR mART core domain. The segment covering 656–670 (GPHDASLDSGSDHHL) has biased composition (basic and acidic residues). NAD(+) contacts are provided by residues 687-699 (TGPGYQELNFALR), 730-733 (RGTN), and Glu-750. Arg-730 is a catalytic residue. Active-site residues include Ser-755 and Glu-795. Residue Glu-795 coordinates NAD(+).

Belongs to the Arg-specific ADP-ribosyltransferase family.

The protein resides in the secreted. The enzyme catalyses L-arginyl-[protein] + NAD(+) = N(omega)-(ADP-D-ribosyl)-L-arginyl-[protein] + nicotinamide + H(+). A probable mono(ADP-ribosyl)transferase, it may ADP-ribosylate Arg in target protein(s). The polypeptide is Putative NAD(+)--arginine ADP-ribosyltransferase Mav (Mycobacterium avium (strain 104)).